The sequence spans 373 residues: C-C chemokine receptor type 2 (373 aa).

The Extracellular portion of the chain corresponds to 1–55 (MEDNNMLPQFIHGILSTSHSLFTRSIQELDEGATTPYDYDDGEPCHKTSVKQIGA). The chain crosses the membrane as a helical span at residues 56–83 (WILPPLYSLVFIFGFVGNMLVIIILIGC). Residues 84–93 (KKLKSMTDIY) are Cytoplasmic-facing. Residues 94–114 (LLNLAISDLLFLLTLPFWAHY) traverse the membrane as a helical segment. The Extracellular portion of the chain corresponds to 115 to 127 (AANEWVFGNIMCK). A disulfide bond links cysteine 126 and cysteine 203. The chain crosses the membrane as a helical span at residues 128-149 (VFTGLYHIGYFGGIFFIILLTI). Residues 150 to 166 (DRYLAIVHAVFALKART) lie on the Cytoplasmic side of the membrane. Position 152 is a phosphotyrosine; by JAK2 (tyrosine 152). A helical transmembrane segment spans residues 167 to 191 (VTFGVITSVVTWVVAVFASLPGIIF). Topologically, residues 192 to 219 (TKSKQDDHHYTCGPYFTQLWKNFQTIMR) are extracellular. The chain crosses the membrane as a helical span at residues 220–239 (NILSLILPLLVMVICYSGIL). The Cytoplasmic segment spans residues 240–256 (HTLFRCRNEKKRHRAVR). A helical membrane pass occupies residues 257-281 (LIFAIMIVYFLFWTPYNIVLFLTTF). Residues 282 to 298 (QESLGMSNCVIDKHLDQ) are Extracellular-facing. The chain crosses the membrane as a helical span at residues 299-322 (AMQVTETLGMTHCCINPVIYAFVG). The Cytoplasmic segment spans residues 323 to 373 (EKFRRYLSIFFRKHIAKRLCKQCPVFYRETADRVSSTFTPSTGEQEVSVGL).

The protein belongs to the G-protein coupled receptor 1 family. Interacts with ARRB1. Interacts (via extracellular N-terminal region) with beta-defensin DEFB106A/DEFB106B; this interaction may preferentially require specific tyrosine sulfation on CCR2. Interacts with NUP85; the interaction is required for CCR2 clusters formation on the cell membrane and CCR2 signaling. Post-translationally, N-glycosylated. Sulfation increases the affinity for both monomeric and dimeric CCL2 with stronger binding to the monomeric form. Binding of sulfated CCR2 to CCL2 promotes conversion of CCL2 from dimer to monomer. In terms of tissue distribution, epressed in mature thymocytes. Detected in monocyte/macrophage cell lines, but not in nonhematopoietic cell lines.

Its subcellular location is the cell membrane. Key functional receptor for CCL2 but can also bind CCL7 and CCL12 chemokines. Its binding with CCL2 on monocytes and macrophages mediates chemotaxis and migration induction through the activation of the PI3K cascade, the small G protein Rac and lamellipodium protrusion. Also acts as a receptor for the beta-defensin DEFB106A/DEFB106B. Regulates the expression of T-cell inflammatory cytokines and T-cell differentiation, promoting the differentiation of T-cells into T-helper 17 cells (Th17) during inflammation. Facilitates the export of mature thymocytes by enhancing directional movement of thymocytes to sphingosine-1-phosphate stimulation and up-regulation of S1P1R expression; signals through the JAK-STAT pathway to regulate FOXO1 activity leading to an increased expression of S1P1R. Plays an important role in mediating peripheral nerve injury-induced neuropathic pain. Increases NMDA-mediated synaptic transmission in both dopamine D1 and D2 receptor-containing neurons, which may be caused by MAPK/ERK-dependent phosphorylation of GRIN2B/NMDAR2B. Mediates the recruitment of macrophages and monocytes to the injury site following brain injury. This Mus musculus (Mouse) protein is C-C chemokine receptor type 2 (Ccr2).